The following is a 316-amino-acid chain: Porphobilinogen deaminase (316 aa).

S-(dipyrrolylmethanemethyl)cysteine is present on Cys-245.

The protein belongs to the HMBS family. In terms of assembly, monomer. Requires dipyrromethane as cofactor.

The enzyme catalyses 4 porphobilinogen + H2O = hydroxymethylbilane + 4 NH4(+). The protein operates within porphyrin-containing compound metabolism; protoporphyrin-IX biosynthesis; coproporphyrinogen-III from 5-aminolevulinate: step 2/4. Its pathway is porphyrin-containing compound metabolism; chlorophyll biosynthesis. Functionally, tetrapolymerization of the monopyrrole PBG into the hydroxymethylbilane pre-uroporphyrinogen in several discrete steps. The protein is Porphobilinogen deaminase of Prochlorococcus marinus (strain MIT 9515).